The chain runs to 31 residues: Cytochrome b6-f complex subunit 6 (31 aa).

Residues 3-23 traverse the membrane as a helical segment; sequence ILINYFLLVGFCFALASGLFL.

The protein belongs to the PetL family. The 4 large subunits of the cytochrome b6-f complex are cytochrome b6, subunit IV (17 kDa polypeptide, PetD), cytochrome f and the Rieske protein, while the 4 small subunits are PetG, PetL, PetM and PetN. The complex functions as a dimer.

The protein localises to the plastid. It is found in the chloroplast thylakoid membrane. In terms of biological role, component of the cytochrome b6-f complex, which mediates electron transfer between photosystem II (PSII) and photosystem I (PSI), cyclic electron flow around PSI, and state transitions. PetL is important for photoautotrophic growth as well as for electron transfer efficiency and stability of the cytochrome b6-f complex. The polypeptide is Cytochrome b6-f complex subunit 6 (Thalassiosira pseudonana (Marine diatom)).